The chain runs to 203 residues: Small ribosomal subunit protein uS4 (203 aa).

One can recognise an S4 RNA-binding domain in the interval 93 to 154 (RRFDNVVYRC…KSRNLDAVAD (62 aa)).

Belongs to the universal ribosomal protein uS4 family. As to quaternary structure, part of the 30S ribosomal subunit. Contacts protein S5. The interaction surface between S4 and S5 is involved in control of translational fidelity.

Functionally, one of the primary rRNA binding proteins, it binds directly to 16S rRNA where it nucleates assembly of the body of the 30S subunit. Its function is as follows. With S5 and S12 plays an important role in translational accuracy. The polypeptide is Small ribosomal subunit protein uS4 (Chlorobaculum parvum (strain DSM 263 / NCIMB 8327) (Chlorobium vibrioforme subsp. thiosulfatophilum)).